The sequence spans 542 residues: Chaperonin GroEL 2 (542 aa).

ATP is bound by residues 30–33 (TLGP), lysine 51, 87–91 (DGTTT), glycine 415, and aspartate 495.

Belongs to the chaperonin (HSP60) family. As to quaternary structure, forms a cylinder of 14 subunits composed of two heptameric rings stacked back-to-back. Interacts with the co-chaperonin GroES.

Its subcellular location is the cytoplasm. It carries out the reaction ATP + H2O + a folded polypeptide = ADP + phosphate + an unfolded polypeptide.. Functionally, together with its co-chaperonin GroES, plays an essential role in assisting protein folding. The GroEL-GroES system forms a nano-cage that allows encapsulation of the non-native substrate proteins and provides a physical environment optimized to promote and accelerate protein folding. This is Chaperonin GroEL 2 from Methylococcus capsulatus (strain ATCC 33009 / NCIMB 11132 / Bath).